A 69-amino-acid chain; its full sequence is Peptide Hact-1 (69 aa).

Residues 1–21 (MDRKFHLCLLLVILGTIIVQG) form the signal peptide. The propeptide occupies 22 to 57 (APLENENDADPDKPQKYRYYLKRATTEKKDNDPAKP). Cysteine 59 and cysteine 68 are disulfide-bonded.

Tentacle (ecto and/or endoderm tissue), and possibly also nematoblasts.

It is found in the secreted. It localises to the nematocyst. Its function is as follows. Peptide with unknown function. Has a limited effect on human peripheral blood mononuclear cells. Does not show activity against both Gram-positive and Gram-negative bacteria nor is it active on the 26 voltage-gated ion channels tested. This is Peptide Hact-1 from Heliofungia actiniformis (Mushroom coral).